The following is a 360-amino-acid chain: Photosystem II protein D1 (360 aa).

The next 3 helical transmembrane spans lie at 29 to 46 (YIGW…SAIS), 118 to 133 (HFFI…EWEL), and 142 to 156 (WICV…AAAA). Position 118 (histidine 118) interacts with chlorophyll a. Pheophytin a is bound at residue tyrosine 126. The [CaMn4O5] cluster site is built by aspartate 170 and glutamate 189. The chain crosses the membrane as a helical span at residues 197-218 (FHMLGVAGVFGGSLFSAMHGSL). Histidine 198 contributes to the chlorophyll a binding site. A quinone is bound by residues histidine 215 and 264–265 (SF). Residue histidine 215 participates in Fe cation binding. Histidine 272 is a binding site for Fe cation. Residues 274-288 (FLGAWPVVGIWFTAM) form a helical membrane-spanning segment. The [CaMn4O5] cluster site is built by histidine 332, glutamate 333, aspartate 342, and alanine 344. A propeptide spanning residues 345–360 (AGESLPVALVAPAVAA) is cleaved from the precursor.

The protein belongs to the reaction center PufL/M/PsbA/D family. In terms of assembly, PSII is composed of 1 copy each of membrane proteins PsbA, PsbB, PsbC, PsbD, PsbE, PsbF, PsbH, PsbI, PsbJ, PsbK, PsbL, PsbM, PsbT, PsbX, PsbY, PsbZ, Psb30/Ycf12, at least 3 peripheral proteins of the oxygen-evolving complex and a large number of cofactors. It forms dimeric complexes. The cofactor is The D1/D2 heterodimer binds P680, chlorophylls that are the primary electron donor of PSII, and subsequent electron acceptors. It shares a non-heme iron and each subunit binds pheophytin, quinone, additional chlorophylls, carotenoids and lipids. D1 provides most of the ligands for the Mn4-Ca-O5 cluster of the oxygen-evolving complex (OEC). There is also a Cl(-1) ion associated with D1 and D2, which is required for oxygen evolution. The PSII complex binds additional chlorophylls, carotenoids and specific lipids.. Tyr-161 forms a radical intermediate that is referred to as redox-active TyrZ, YZ or Y-Z. In terms of processing, C-terminally processed by CTPA; processing is essential to allow assembly of the oxygen-evolving complex and thus photosynthetic growth.

The protein localises to the plastid. It is found in the chloroplast thylakoid membrane. The enzyme catalyses 2 a plastoquinone + 4 hnu + 2 H2O = 2 a plastoquinol + O2. Functionally, photosystem II (PSII) is a light-driven water:plastoquinone oxidoreductase that uses light energy to abstract electrons from H(2)O, generating O(2) and a proton gradient subsequently used for ATP formation. It consists of a core antenna complex that captures photons, and an electron transfer chain that converts photonic excitation into a charge separation. The D1/D2 (PsbA/PsbD) reaction center heterodimer binds P680, the primary electron donor of PSII as well as several subsequent electron acceptors. This Emiliania huxleyi (Coccolithophore) protein is Photosystem II protein D1.